The primary structure comprises 500 residues: Probable cytosol aminopeptidase (500 aa).

Positions 268 and 273 each coordinate Mn(2+). The active site involves Lys-280. Residues Asp-291, Asp-350, and Glu-352 each coordinate Mn(2+). Arg-354 is a catalytic residue.

It belongs to the peptidase M17 family. It depends on Mn(2+) as a cofactor.

It localises to the cytoplasm. The catalysed reaction is Release of an N-terminal amino acid, Xaa-|-Yaa-, in which Xaa is preferably Leu, but may be other amino acids including Pro although not Arg or Lys, and Yaa may be Pro. Amino acid amides and methyl esters are also readily hydrolyzed, but rates on arylamides are exceedingly low.. It carries out the reaction Release of an N-terminal amino acid, preferentially leucine, but not glutamic or aspartic acids.. In terms of biological role, presumably involved in the processing and regular turnover of intracellular proteins. Catalyzes the removal of unsubstituted N-terminal amino acids from various peptides. The protein is Probable cytosol aminopeptidase of Baumannia cicadellinicola subsp. Homalodisca coagulata.